Reading from the N-terminus, the 293-residue chain is Formamidopyrimidine-DNA glycosylase (293 aa).

The Schiff-base intermediate with DNA role is filled by Pro2. The active-site Proton donor is the Glu3. The Proton donor; for beta-elimination activity role is filled by Lys60. Residues His110, Arg129, and Arg174 each coordinate DNA. The FPG-type zinc-finger motif lies at 259–293 (NVYRRTGKECRKCGNLIERKKISGRSTHWCPKCQK). Arg283 acts as the Proton donor; for delta-elimination activity in catalysis.

The protein belongs to the FPG family. In terms of assembly, monomer. It depends on Zn(2+) as a cofactor.

It carries out the reaction Hydrolysis of DNA containing ring-opened 7-methylguanine residues, releasing 2,6-diamino-4-hydroxy-5-(N-methyl)formamidopyrimidine.. The enzyme catalyses 2'-deoxyribonucleotide-(2'-deoxyribose 5'-phosphate)-2'-deoxyribonucleotide-DNA = a 3'-end 2'-deoxyribonucleotide-(2,3-dehydro-2,3-deoxyribose 5'-phosphate)-DNA + a 5'-end 5'-phospho-2'-deoxyribonucleoside-DNA + H(+). Involved in base excision repair of DNA damaged by oxidation or by mutagenic agents. Acts as a DNA glycosylase that recognizes and removes damaged bases. Has a preference for oxidized purines, such as 7,8-dihydro-8-oxoguanine (8-oxoG). Has AP (apurinic/apyrimidinic) lyase activity and introduces nicks in the DNA strand. Cleaves the DNA backbone by beta-delta elimination to generate a single-strand break at the site of the removed base with both 3'- and 5'-phosphates. The polypeptide is Formamidopyrimidine-DNA glycosylase (Prochlorococcus marinus (strain MIT 9215)).